The primary structure comprises 95 residues: Co-chaperonin GroES (95 aa).

This sequence belongs to the GroES chaperonin family. As to quaternary structure, heptamer of 7 subunits arranged in a ring. Interacts with the chaperonin GroEL.

It is found in the cytoplasm. Together with the chaperonin GroEL, plays an essential role in assisting protein folding. The GroEL-GroES system forms a nano-cage that allows encapsulation of the non-native substrate proteins and provides a physical environment optimized to promote and accelerate protein folding. GroES binds to the apical surface of the GroEL ring, thereby capping the opening of the GroEL channel. In Xylella fastidiosa (strain M23), this protein is Co-chaperonin GroES.